A 259-amino-acid chain; its full sequence is Phospholipase YtpA (259 aa).

The active-site Nucleophile is the serine 88. Active-site charge relay system residues include aspartate 206 and histidine 236.

It belongs to the AB hydrolase superfamily.

It functions in the pathway antibiotic biosynthesis; bacilysocin biosynthesis. In terms of biological role, phospholipase involved in the biosynthesis of the antibiotic bacilysocin. It probably catalyzes the hydrolysis of the 2-sn-acyl moiety of phosphatidylglycerol to produce bacilysocin (lysophosphatidylglycerol). Is also able to catalyze the hydrolysis reaction of one acyl bond in phosphatidylcholine in vitro (actual cleavage point is unknown), resulting in lysophosphatidylcholine. This Bacillus subtilis (strain 168) protein is Phospholipase YtpA (ytpA).